The primary structure comprises 523 residues: Magnesium/proton exchanger 1 (523 aa).

Transmembrane regions (helical) follow at residues 24-44 (LLPIGVRAFIYTAVLAYCFIG), 88-108 (IADVALLAFGTSFPQISLATI), 125-145 (GTLVGSAAFDLFPIHAVCVVM), 157-177 (LGVWLVELFWSFWAYIWLYII), 185-205 (VITLWEALLTVLQYGLLLLHA), 325-345 (VIGISWNLIIAPWKMLFAFVP), 349-369 (IAHGWIAFICSLIFISGIAYG), 377-397 (ISCVTGVSPYVIAFTALAAGT), 428-448 (VNIYVGIGVPWLVDTMYNYFV), 461-481 (LSFSLLVFFATSFGCITVLVL), and 495-515 (MWAWATSVYFMILWVVFVVLS).

This sequence belongs to the Ca(2+):cation antiporter (CaCA) (TC 2.A.19) family. MHX subfamily.

It localises to the vacuole membrane. Vacuolar transporter that exchanges protons with Mg(2+), Zn(2+) and Fe(2+) ions. May control the partitioning of Mg(2+) and Zn(2+) between plant organs. The chain is Magnesium/proton exchanger 1 (MHX1) from Oryza sativa subsp. japonica (Rice).